A 96-amino-acid polypeptide reads, in one-letter code: Putative pterin-4-alpha-carbinolamine dehydratase (96 aa).

The protein belongs to the pterin-4-alpha-carbinolamine dehydratase family.

The enzyme catalyses (4aS,6R)-4a-hydroxy-L-erythro-5,6,7,8-tetrahydrobiopterin = (6R)-L-erythro-6,7-dihydrobiopterin + H2O. The polypeptide is Putative pterin-4-alpha-carbinolamine dehydratase (Herpetosiphon aurantiacus (strain ATCC 23779 / DSM 785 / 114-95)).